Reading from the N-terminus, the 809-residue chain is Ribonuclease Z 1 (809 aa).

The interval 74–93 is disordered; the sequence is ISSPDTYDSSSSSSTTSVSD.

Belongs to the RNase Z family. Requires Zn(2+) as cofactor.

The protein resides in the nucleus. It localises to the cytoplasm. It carries out the reaction Endonucleolytic cleavage of RNA, removing extra 3' nucleotides from tRNA precursor, generating 3' termini of tRNAs. A 3'-hydroxy group is left at the tRNA terminus and a 5'-phosphoryl group is left at the trailer molecule.. Functionally, zinc phosphodiesterase, which displays some tRNA 3'-processing endonuclease activity. May be involved in tRNA maturation, by removing a 3'-trailer from precursor tRNA. This is Ribonuclease Z 1 (trz1) from Schizosaccharomyces pombe (strain 972 / ATCC 24843) (Fission yeast).